A 500-amino-acid chain; its full sequence is GTPase Der (500 aa).

2 consecutive EngA-type G domains span residues 3–166 and 211–384; these read PVVA…MEEL and IKLA…VSAT. Residues 9-16, 56-60, 118-121, 217-224, 264-268, and 329-332 each bind GTP; these read GRPNVGKS, DTGGI, NKID, DTAGV, and NKWD. Residues 385–469 form the KH-like domain; sequence KRVGTSVLTR…PIRIQFQNSE (85 aa). A disordered region spans residues 468-500; it reads SENPFEDRGGKLTMSQERQRKRLLGAVKNRNKK. The span at 486–500 shows a compositional bias: basic residues; that stretch reads QRKRLLGAVKNRNKK.

The protein belongs to the TRAFAC class TrmE-Era-EngA-EngB-Septin-like GTPase superfamily. EngA (Der) GTPase family. Associates with the 50S ribosomal subunit.

GTPase that plays an essential role in the late steps of ribosome biogenesis. The sequence is that of GTPase Der from Aliivibrio fischeri (strain ATCC 700601 / ES114) (Vibrio fischeri).